The chain runs to 237 residues: Phosphoribosylaminoimidazole-succinocarboxamide synthase (237 aa).

It belongs to the SAICAR synthetase family.

It catalyses the reaction 5-amino-1-(5-phospho-D-ribosyl)imidazole-4-carboxylate + L-aspartate + ATP = (2S)-2-[5-amino-1-(5-phospho-beta-D-ribosyl)imidazole-4-carboxamido]succinate + ADP + phosphate + 2 H(+). The protein operates within purine metabolism; IMP biosynthesis via de novo pathway; 5-amino-1-(5-phospho-D-ribosyl)imidazole-4-carboxamide from 5-amino-1-(5-phospho-D-ribosyl)imidazole-4-carboxylate: step 1/2. This Edwardsiella ictaluri (strain 93-146) protein is Phosphoribosylaminoimidazole-succinocarboxamide synthase.